Here is a 252-residue protein sequence, read N- to C-terminus: Ubiquinone biosynthesis protein COQ4 homolog 1, mitochondrial (252 aa).

Zn(2+)-binding residues include H130, D131, H134, and E146.

Belongs to the COQ4 family. In terms of assembly, component of a multi-subunit COQ enzyme complex. Zn(2+) is required as a cofactor.

It is found in the mitochondrion inner membrane. The catalysed reaction is a 4-hydroxy-3-methoxy-5-(all-trans-polyprenyl)benzoate + H(+) = a 2-methoxy-6-(all-trans-polyprenyl)phenol + CO2. The protein operates within cofactor biosynthesis; ubiquinone biosynthesis. Functionally, lyase that catalyzes the C1-decarboxylation of 4-hydroxy-3-methoxy-5-(all-trans-polyprenyl)benzoic acid into 2-methoxy-6-(all-trans-polyprenyl)phenol during ubiquinone biosynthesis. The polypeptide is Ubiquinone biosynthesis protein COQ4 homolog 1, mitochondrial (Trypanosoma cruzi (strain CL Brener)).